The primary structure comprises 949 residues: Glutamate receptor ionotropic, kainate 1 (949 aa).

The signal sequence occupies residues M1–P30. Over Q31–P576 the chain is Extracellular. N-linked (GlcNAc...) asparagine glycans are attached at residues N68, N74, N276, N379, N428, N439, and N446. 3 residues coordinate L-glutamate: P531, T533, and R538. N561 carries N-linked (GlcNAc...) asparagine glycosylation. A helical membrane pass occupies residues D577 to A597. At R598–G653 the chain is on the cytoplasmic side. Residues I654–L674 traverse the membrane as a helical segment. Over T675–N834 the chain is Extracellular. The L-glutamate site is built by S704 and T705. S725 carries the phosphoserine; by PKC modification. E753 contributes to the L-glutamate binding site. At T761 the chain carries Phosphothreonine; by PKC. The cysteines at positions 765 and 819 are disulfide-linked. The N-linked (GlcNAc...) asparagine glycan is linked to N766. A helical transmembrane segment spans residues I835 to G855. Over E856–A949 the chain is Cytoplasmic.

It belongs to the glutamate-gated ion channel (TC 1.A.10.1) family. GRIK1 subfamily. Homotetramer or heterotetramer of pore-forming glutamate receptor subunits. Tetramers may be formed by the dimerization of dimers. Can form functional heteromeric receptors with GRIK4 and GRIK5. Interacts with KLHL17. Expressed in the olfactory bulb (at protein level). Expressed in subsets of neurons throughout the developing and adult central and peripheral nervous systems. In the CNS principally in the medial amygdaloid nuclei, medial habenulae, pyriform and cingulate cortices, and Purkinje cell layer. Also highly expressed in embryonic and adult dorsal root ganglia. Expressed at high levels in the trigeminal ganglion neurons.

The protein resides in the cell membrane. It is found in the postsynaptic cell membrane. The catalysed reaction is Ca(2+)(in) = Ca(2+)(out). In terms of biological role, ionotropic glutamate receptor that functions as a cation-permeable ligand-gated ion channel, gated by L-glutamate and the glutamatergic agonist kainic acid. L-glutamate acts as an excitatory neurotransmitter at many synapses in the central nervous system. Binding of the excitatory neurotransmitter L-glutamate induces a conformation change, leading to the opening of the cation channel, and thereby converts the chemical signal to an electrical impulse. The receptor then desensitizes rapidly and enters a transient inactive state, characterized by the presence of bound agonist. The protein is Glutamate receptor ionotropic, kainate 1 (Grik1) of Rattus norvegicus (Rat).